The chain runs to 652 residues: MEKPPSPPPPPRAQTSPGLGKVGVLPNRRLGAVRGGLMSSPPGRRARLASPGTSRPSSEAREELRRRLRDLIEGNRVMIFSKSYCPHSTRVKELFSSLGVVYNILELDQVDDGASVQEVLTEISNQKTVPNIFVNKVHVGGCDRTFQAHQNGLLQKLLQDDSAHDYDLIIIGGGSGGLSCAKEAANLGKKVMVLDFVVPSPQGTTWGLGGTCVNVGCIPKKLMHQAALLGHALQDAKKYGWEYNQQVKHNWEAMTEAIQSHIGSLNWGYRVTLREKGVTYVNSFGEFVDLHKIKATNKKGQETFYTASKFVIATGERPRYLGIQGDKEYCITSDDLFSLPYCPGCTLVVGASYVGLECAGFLAGLGLDVTVMVRSVLLRGFDQEMAEKVGSYLEQQGVKFQRKFTPILVQQLEKGLPGKLKVVAKSTEGPETVEGIYNTVLLAIGRDSCTRKIGLEKIGVKINEKNGKIPVNDVEQTNVPHVYAIGDILDGKPELTPVAIQAGKLLARRLFGVSLEKCDYINIPTTVFTPLEYGCCGLSEEKAIEMYKKENLEVYHTLFWPLEWTVAGRDNNTCYAKIICNKFDNERVVGFHLLGPNAGEITQGFAAAMKCGLTKQLLDDTIGIHPTCGEVFTTLEITKSSGLDITQKGCUG.

Pro residues predominate over residues 1–12; that stretch reads MEKPPSPPPPPR. The tract at residues 1–62 is disordered; it reads MEKPPSPPPP…TSRPSSEARE (62 aa). Residue arginine 34 is modified to Asymmetric dimethylarginine; alternate. Arginine 34 is modified (omega-N-methylarginine; alternate). A Phosphoserine modification is found at serine 50. The 101-residue stretch at 65-165 folds into the Glutaredoxin domain; it reads RRRLRDLIEG…KLLQDDSAHD (101 aa). 167-196 contacts FAD; the sequence is DLIIIGGGSGGLSCAKEAANLGKKVMVLDF. Cysteine 212 and cysteine 217 are joined by a disulfide. Lysine 388 is modified (N6-succinyllysine). Histidine 625 functions as the Proton acceptor in the catalytic mechanism. Positions 650–651 form a cross-link, cysteinyl-selenocysteine (Cys-Sec); that stretch reads CU. Position 651 (selenocysteine 651) is a non-standard amino acid, selenocysteine.

This sequence belongs to the class-I pyridine nucleotide-disulfide oxidoreductase family. As to quaternary structure, homodimer. The cofactor is FAD. Expressed preferentially in testis where it is found in spermatids and spermatocytes but not in sperm. In elongating spermatids, expressed at the site of mitochondrial sheath formation. Low levels in other tissues including heart, lung, liver, kidney, brain, muscle and prostate.

Its subcellular location is the cytoplasm. It is found in the nucleus. The protein localises to the microsome. The protein resides in the endoplasmic reticulum. The enzyme catalyses [thioredoxin]-dithiol + NADP(+) = [thioredoxin]-disulfide + NADPH + H(+). In terms of biological role, displays thioredoxin reductase, glutaredoxin and glutathione reductase activities. Catalyzes disulfide bond isomerization. Promotes disulfide bond formation between GPX4 and various sperm proteins and may play a role in sperm maturation by promoting formation of sperm structural components. The protein is Thioredoxin reductase 3 of Mus musculus (Mouse).